A 451-amino-acid polypeptide reads, in one-letter code: Exodeoxyribonuclease 7 large subunit (451 aa).

This sequence belongs to the XseA family. As to quaternary structure, heterooligomer composed of large and small subunits.

It localises to the cytoplasm. It carries out the reaction Exonucleolytic cleavage in either 5'- to 3'- or 3'- to 5'-direction to yield nucleoside 5'-phosphates.. In terms of biological role, bidirectionally degrades single-stranded DNA into large acid-insoluble oligonucleotides, which are then degraded further into small acid-soluble oligonucleotides. The sequence is that of Exodeoxyribonuclease 7 large subunit from Neisseria gonorrhoeae (strain ATCC 700825 / FA 1090).